The primary structure comprises 274 residues: Glucosamine-6-phosphate deaminase (274 aa).

Catalysis depends on Asp72, which acts as the Proton acceptor; for enolization step. Catalysis depends on Asp141, which acts as the For ring-opening step. The active-site Proton acceptor; for ring-opening step is His143. The active-site For ring-opening step is Glu148.

Belongs to the glucosamine/galactosamine-6-phosphate isomerase family. In terms of assembly, homohexamer.

The protein localises to the cytoplasm. The catalysed reaction is alpha-D-glucosamine 6-phosphate + H2O = beta-D-fructose 6-phosphate + NH4(+). Its pathway is nucleotide-sugar biosynthesis; UDP-N-acetyl-alpha-D-glucosamine biosynthesis; alpha-D-glucosamine 6-phosphate from D-fructose 6-phosphate: step 1/1. In terms of biological role, catalyzes the reversible conversion of alpha-D-glucosamine 6-phosphate (GlcN-6P) into beta-D-fructose 6-phosphate (Fru-6P) and ammonium ion, a regulatory reaction step in de novo uridine diphosphate-N-acetyl-alpha-D-glucosamine (UDP-GlcNAc) biosynthesis via hexosamine pathway. The protein is Glucosamine-6-phosphate deaminase of Drosophila pseudoobscura pseudoobscura (Fruit fly).